The chain runs to 132 residues: Interleukin-5 (132 aa).

The signal sequence occupies residues 1 to 19 (MHLRLTLVALGAAYVCANA). N-linked (GlcNAc...) asparagine glycans are attached at residues N74 and N88.

The protein belongs to the IL-5 family. As to quaternary structure, homodimer; disulfide-linked. Interacts with IL5RA. Interacts with CSF2RB.

The protein resides in the secreted. Functionally, homodimeric cytokine expressed predominantly by T-lymphocytes and NK cells that plays an important role in the survival, differentiation, and chemotaxis of eosinophils. Also acts on activated and resting B-cells to induce immunoglobulin production, growth, and differentiation. Mechanistically, exerts its biological effects through a receptor composed of IL5RA subunit and the cytokine receptor common subunit beta/CSF2RB. Binding to the receptor leads to activation of various kinases including LYN, SYK and JAK2 and thereby propagates signals through the RAS-MAPK and JAK-STAT5 pathways respectively. The polypeptide is Interleukin-5 (IL5) (Ovis aries (Sheep)).